Consider the following 352-residue polypeptide: DNA ADP-ribosyl glycohydrolase (352 aa).

The Macro domain occupies 1-155 (MITYGSGDLL…IYPPSGGSRA (155 aa)). ADP-D-ribose is bound by residues 8–9 (DL), 20–22 (TVN), 31–34 (IALQ), and threonine 79. Lysine 80 (nucleophile) is an active-site residue. Position 117–121 (117–121 (GVGNG)) interacts with ADP-D-ribose. The tract at residues 164–352 (MTWGRAVILE…VALDRILMTA (189 aa)) is interaction with DarT.

This sequence belongs to the DarG ADP-ribosyl glycohydrolase family. Interacts (via C-terminus) with cognate toxin DarT; this heterodimeric complex neutralizes the toxic effect of DarT by preventing ssDNA binding to DarT and consequently inactivating the toxin by direct protein-protein interactions.

The catalysed reaction is an N-(ADP-alpha-D-ribosyl)-thymidine in DNA + H2O = a thymidine in DNA + ADP-D-ribose. Its function is as follows. Antitoxin component of the hybrid type II/IV toxin-antitoxin (TA) system DarTG, which plays a crucial role in controlling bacterial growth and bacteriophage infection. De-ADP-ribosylates DNA (probably) modified on thymidine by its cognate toxin DarT, which neutralizes the activity of cognate toxin DarT. This Mycobacterium bovis (strain BCG / Pasteur 1173P2) protein is DNA ADP-ribosyl glycohydrolase.